The chain runs to 81 residues: Costars family protein ABRACL (81 aa).

The protein belongs to the costars family.

The sequence is that of Costars family protein ABRACL (abracl) from Xenopus tropicalis (Western clawed frog).